The following is a 480-amino-acid chain: Uridine 5'-monophosphate synthase (480 aa).

N-acetylalanine is present on alanine 2. Residues 2 to 214 form an OPRTase region; it reads AVARAALGPL…VFVAANHNGS (213 aa). Tyrosine 37 is modified (phosphotyrosine). Serine 214 is modified (phosphoserine). Residues 215–220 form a domain linker region; the sequence is PLSIKE. An OMPdecase region spans residues 221-480; sequence APKELSFGAR…WEAYLSRLGV (260 aa). Orotidine 5'-phosphate is bound at residue serine 257. UMP contacts are provided by residues serine 257, aspartate 259, and 281–283; that span reads KTH. Lysine 281 provides a ligand contact to orotidine 5'-phosphate. Active-site for OMPdecase activity residues include aspartate 312, lysine 314, and aspartate 317. Residues lysine 314, aspartate 317, threonine 321, serine 372, 430 to 432, and 450 to 451 contribute to the orotidine 5'-phosphate site; these read QQY and GR. Residues aspartate 317, threonine 321, serine 372, 430-432, and 450-451 each bind UMP; these read QQY and GR.

In the N-terminal section; belongs to the purine/pyrimidine phosphoribosyltransferase family. This sequence in the C-terminal section; belongs to the OMP decarboxylase family. In terms of assembly, homodimer; dimerization is required for enzymatic activity.

The enzyme catalyses orotidine 5'-phosphate + diphosphate = orotate + 5-phospho-alpha-D-ribose 1-diphosphate. It carries out the reaction orotidine 5'-phosphate + H(+) = UMP + CO2. Its pathway is pyrimidine metabolism; UMP biosynthesis via de novo pathway; UMP from orotate: step 1/2. It functions in the pathway pyrimidine metabolism; UMP biosynthesis via de novo pathway; UMP from orotate: step 2/2. Bifunctional enzyme catalyzing the last two steps of de novo pyrimidine biosynthesis, orotate phosphoribosyltransferase (OPRT), which converts orotate to orotidine-5'-monophosphate (OMP), and orotidine-5'-monophosphate decarboxylase (ODC), the terminal enzymatic reaction that decarboxylates OMP to uridine monophosphate (UMP). The chain is Uridine 5'-monophosphate synthase from Homo sapiens (Human).